Reading from the N-terminus, the 296-residue chain is Urease accessory protein UreD (296 aa).

This sequence belongs to the UreD family. As to quaternary structure, ureD, UreF and UreG form a complex that acts as a GTP-hydrolysis-dependent molecular chaperone, activating the urease apoprotein by helping to assemble the nickel containing metallocenter of UreC. The UreE protein probably delivers the nickel.

It localises to the cytoplasm. Its function is as follows. Required for maturation of urease via the functional incorporation of the urease nickel metallocenter. This chain is Urease accessory protein UreD, found in Nitrosococcus oceani (strain ATCC 19707 / BCRC 17464 / JCM 30415 / NCIMB 11848 / C-107).